A 506-amino-acid chain; its full sequence is Cytochrome P450 94B3 (506 aa).

The chain crosses the membrane as a helical span at residues 2 to 22; sequence AFLLSFLILAFLITIIFFLSS. Cys447 provides a ligand contact to heme.

It belongs to the cytochrome P450 family. Requires heme as cofactor.

It localises to the membrane. It is found in the endoplasmic reticulum membrane. It carries out the reaction a jasmonyl-L-amino acid + reduced [NADPH--hemoprotein reductase] + O2 = a 12-hydroxyjasmonyl-L-alpha-amino acid + oxidized [NADPH--hemoprotein reductase] + H2O + H(+). The enzyme catalyses L-isoleucine-(+)-7-isojasmonate + NADPH + O2 + H(+) = L-isoleucine-(+)-12-hydroxy-7-isojasmonate + NADP(+) + H2O. It catalyses the reaction a jasmonyl-L-isoleucinate + NADPH + O2 + H(+) = L-isoleucine-12-hydroxyjasmonate + NADP(+) + H2O. Its function is as follows. Hydroxylase involved in the oxidation of the plant hormone jasmonoyl-L-isoleucine (JA-Ile), a bioactive phytohormone of the jasmonate-mediated signaling pathway. Converts JA-Ile to 12-hydroxy-JA-Ile. Exerts negative feedback control on JA-Ile levels and plays a key role in attenuation of jasmonate responses. Negatively regulates the expression of wound-induced genes TIFY11A/JAZ5, TIFY5A/JAZ8 and TIFY5A/JAZ10. Catalyzes the hydroxylation of jasmonoyl-L-valine (JA-Val), jasmonoyl-L-leucine (JA-Leu) and jasmonoyl-L-phenylalanine (JA-Phe) in vitro. Converts JA-Val, JA-Leu and JA-Phe to 12-hydroxy-JA-Val, 12-hydroxy-JA-Leu and 12-hydroxy-JA-Phe, respectively. This Arabidopsis thaliana (Mouse-ear cress) protein is Cytochrome P450 94B3.